A 309-amino-acid chain; its full sequence is Fructosamine-3-kinase (309 aa).

M1 is subject to N-acetylmethionine. ATP is bound at residue 89-91 (EHL). D217 acts as the Proton acceptor in catalysis.

The protein belongs to the fructosamine kinase family. Monomer. As to expression, widely expressed. Expressed in erythrocytes.

It catalyses the reaction N(6)-(D-fructosyl)-L-lysyl-[protein] + ATP = N(6)-(3-O-phospho-D-fructosyl)-L-lysyl-[protein] + ADP + H(+). The catalysed reaction is N(6)-D-ribulosyl-L-lysyl-[protein] + ATP = N(6)-(3-O-phospho-D-ribulosyl)-L-lysyl-[protein] + ADP + H(+). The enzyme catalyses N(6)-(D-psicosyl)-L-lysyl-[protein] + ATP = N(6)-(3-O-phospho-D-psicosyl)-L-lysyl-[protein] + ADP + H(+). Functionally, fructosamine-3-kinase involved in protein deglycation by mediating phosphorylation of fructoselysine residues on glycated proteins, to generate fructoselysine-3 phosphate. Fructoselysine-3 phosphate adducts are unstable and decompose under physiological conditions. Involved in intracellular deglycation in erythrocytes. Involved in the response to oxidative stress by mediating deglycation of NFE2L2/NRF2, glycation impairing NFE2L2/NRF2 function. Also able to phosphorylate psicosamines and ribulosamines. In Homo sapiens (Human), this protein is Fructosamine-3-kinase.